The sequence spans 107 residues: MEYRTDQVPMSPRSVQGAPGTLPIRDHLPWSIFNLFYMNVCCLGLTAMIFSVKSRDRKVVGDVEGARHYGSTARSLNIAATVLGILLIIILIGLAATGTIQALKYKG.

At 1–31 (MEYRTDQVPMSPRSVQGAPGTLPIRDHLPWS) the chain is on the extracellular side. The helical transmembrane segment at 32 to 52 (IFNLFYMNVCCLGLTAMIFSV) threads the bilayer. Residues Cys41 and Cys42 are each lipidated (S-palmitoyl cysteine). Residues 53-77 (KSRDRKVVGDVEGARHYGSTARSLN) lie on the Cytoplasmic side of the membrane. Residues 78-98 (IAATVLGILLIIILIGLAATG) form a helical membrane-spanning segment. The Extracellular segment spans residues 99–107 (TIQALKYKG).

It belongs to the CD225/Dispanin family. As to expression, expressed various cell types in torpedo electric organ and muscle, especially fibroblasts, capillary endothelial cells, and axonal cuff cells.

It is found in the cell membrane. In Torpedo marmorata (Marbled electric ray), this protein is Dispanin subfamily A member 2b.